The following is a 681-amino-acid chain: 2-(S-pantetheinyl)-carbapenam-3-carboxylate methyltransferase (681 aa).

Residues 1-144 (MTVPAARSGR…IERLADHPDY (144 aa)) enclose the B12-binding domain. 7 residues coordinate cob(II)alamin: asparagine 18, serine 72, tyrosine 74, valine 75, histidine 103, glycine 126, and glutamate 127. In terms of domain architecture, Radical SAM core spans 192 to 417 (RDLRFYALWE…RLYVEEPGTP (226 aa)). Positions 206 and 210 each coordinate [4Fe-4S] cluster. Residue phenylalanine 212 coordinates 5'-deoxyadenosine. Residue cysteine 213 participates in [4Fe-4S] cluster binding. Aspartate 214 and cysteine 249 together coordinate cob(II)alamin. Glutamine 312, glutamate 349, and glycine 384 together coordinate 5'-deoxyadenosine.

The protein belongs to the methyltransferase superfamily. [4Fe-4S] cluster serves as cofactor. The cofactor is cob(II)alamin.

It carries out the reaction (2R,3R,5S)-2-(S-pantetheinyl)-carbapenam-3-carboxylate + AH2 + 2 S-adenosyl-L-methionine = (2R,3R,5S,6R)-6-(methyl)-2-(S-pantetheinyl)-carbapenam-3-carboxylate + 5'-deoxyadenosine + L-methionine + A + S-adenosyl-L-homocysteine + 2 H(+). The enzyme catalyses (2R,3R,5S,6R)-6-(methyl)-2-(S-pantetheinyl)-carbapenam-3-carboxylate + AH2 + 2 S-adenosyl-L-methionine = (2R,3R,5S,6R)-6-(ethyl)-2-(S-pantetheinyl)-carbapenam-3-carboxylate + 5'-deoxyadenosine + L-methionine + A + S-adenosyl-L-homocysteine + 2 H(+). It participates in antibiotic biosynthesis. Its function is as follows. Methyltransferase involved in the biosynthesis of the beta-lactam carbapenem antibiotic thienamycin. Catalyzes two consecutive S-adenosyl-L-methionine-dependent methylations to build out the C6-ethyl side chain in a stereocontrolled manner. In vitro can use methyl viologen and NADPH as the iron-sulfur cluster reductants. This chain is 2-(S-pantetheinyl)-carbapenam-3-carboxylate methyltransferase, found in Streptantibioticus cattleyicolor (strain ATCC 35852 / DSM 46488 / JCM 4925 / NBRC 14057 / NRRL 8057) (Streptomyces cattleya).